The following is a 315-amino-acid chain: Olfactory receptor 5P59 (315 aa).

Over 1 to 28 (MAFLQDGNHTAVTEFILLGLTDDPVLRV) the chain is Extracellular. Asparagine 8 carries N-linked (GlcNAc...) asparagine glycosylation. Residues 29–49 (VLFTIILCIYLVTVFGNLSTI) traverse the membrane as a helical segment. At 50–57 (LLIRVSSQ) the chain is on the cytoplasmic side. The chain crosses the membrane as a helical span at residues 58-78 (LHHPMYFFLSHLASVDIGISS). Residues 79 to 102 (SVTPSMLVNFLLERSTISYLGCGI) lie on the Extracellular side of the membrane. Cysteine 100 and cysteine 193 form a disulfide bridge. The helical transmembrane segment at 103–123 (QLGSADFIASVECFLLAAMAY) threads the bilayer. The Cytoplasmic segment spans residues 124–136 (DRFMAVCNPLLYS). Residues 137–157 (TKMSTQVCVQLVVGSYIGGFL) traverse the membrane as a helical segment. Topologically, residues 158–200 (NASLIVTVYFFSFLFCGPNRIDHFFCDFAPLAELSCSDVSVSV) are extracellular. Residues 201–221 (LIISFSAGSVTMITVFVIVIS) form a helical membrane-spanning segment. Topologically, residues 222–241 (YSYILITILKMHSTEGRHKA) are cytoplasmic. The helical transmembrane segment at 242–262 (FSTCTSHLTAVTLYYGTITFI) threads the bilayer. Over 263–275 (YVMPKSSFSTDQN) the chain is Extracellular. The chain crosses the membrane as a helical span at residues 276-296 (KVVSVFYMVMIPMLNPLIYSL). Residues 297–315 (SNNEIKGALKRQLGMKTLS) are Cytoplasmic-facing.

The protein belongs to the G-protein coupled receptor 1 family.

The protein localises to the cell membrane. Functionally, potential odorant receptor. This Mus musculus (Mouse) protein is Olfactory receptor 5P59.